We begin with the raw amino-acid sequence, 291 residues long: Phosphatidylglycerol--prolipoprotein diacylglyceryl transferase (291 aa).

4 helical membrane passes run 24-44 (WYAL…RALL), 64-84 (FILW…VLFY), 100-120 (WNGG…VILF), and 125-145 (GLPI…GLFL). Arg-147 lines the a 1,2-diacyl-sn-glycero-3-phospho-(1'-sn-glycerol) pocket. The next 3 membrane-spanning stretches (helical) occupy residues 187–207 (AALE…LGAL), 211–231 (GLVL…AEFF), and 247–267 (MGML…YAAW).

The protein belongs to the Lgt family.

The protein localises to the cell inner membrane. It carries out the reaction L-cysteinyl-[prolipoprotein] + a 1,2-diacyl-sn-glycero-3-phospho-(1'-sn-glycerol) = an S-1,2-diacyl-sn-glyceryl-L-cysteinyl-[prolipoprotein] + sn-glycerol 1-phosphate + H(+). Its pathway is protein modification; lipoprotein biosynthesis (diacylglyceryl transfer). Catalyzes the transfer of the diacylglyceryl group from phosphatidylglycerol to the sulfhydryl group of the N-terminal cysteine of a prolipoprotein, the first step in the formation of mature lipoproteins. The chain is Phosphatidylglycerol--prolipoprotein diacylglyceryl transferase from Nitrobacter winogradskyi (strain ATCC 25391 / DSM 10237 / CIP 104748 / NCIMB 11846 / Nb-255).